Here is a 320-residue protein sequence, read N- to C-terminus: tRNA dimethylallyltransferase (320 aa).

Position 5–12 (5–12) interacts with ATP; that stretch reads GPTAVGKS. 7–12 serves as a coordination point for substrate; that stretch reads TAVGKS. Residues 30 to 33 are interaction with substrate tRNA; that stretch reads DSMQ.

Belongs to the IPP transferase family. As to quaternary structure, monomer. Mg(2+) is required as a cofactor.

The enzyme catalyses adenosine(37) in tRNA + dimethylallyl diphosphate = N(6)-dimethylallyladenosine(37) in tRNA + diphosphate. Functionally, catalyzes the transfer of a dimethylallyl group onto the adenine at position 37 in tRNAs that read codons beginning with uridine, leading to the formation of N6-(dimethylallyl)adenosine (i(6)A). The chain is tRNA dimethylallyltransferase from Heliobacterium modesticaldum (strain ATCC 51547 / Ice1).